The following is a 697-amino-acid chain: Polyribonucleotide nucleotidyltransferase (697 aa).

Aspartate 488 and aspartate 494 together coordinate Mg(2+). In terms of domain architecture, KH spans 555-614; it reads PTFEVITINPDKIRDVIGKGGATIRQITEETKAAIDIEDNGTVRVFGETKAAAKAAIAKI. Residues 624–692 form the S1 motif domain; the sequence is GKIYDGKVIR…NRGRIKLTMK (69 aa).

It belongs to the polyribonucleotide nucleotidyltransferase family. As to quaternary structure, component of the RNA degradosome, which is a multiprotein complex involved in RNA processing and mRNA degradation. The cofactor is Mg(2+).

Its subcellular location is the cytoplasm. The enzyme catalyses RNA(n+1) + phosphate = RNA(n) + a ribonucleoside 5'-diphosphate. In terms of biological role, involved in mRNA degradation. Catalyzes the phosphorolysis of single-stranded polyribonucleotides processively in the 3'- to 5'-direction. The chain is Polyribonucleotide nucleotidyltransferase from Acinetobacter baumannii (strain AB307-0294).